The sequence spans 359 residues: Phosphoserine aminotransferase (359 aa).

Position 42 (Arg-42) interacts with L-glutamate. Pyridoxal 5'-phosphate-binding positions include 76–77 (AS), Trp-102, Thr-152, Asp-171, and Gln-194. Lys-195 carries the N6-(pyridoxal phosphate)lysine modification. 236–237 (NT) contributes to the pyridoxal 5'-phosphate binding site.

It belongs to the class-V pyridoxal-phosphate-dependent aminotransferase family. SerC subfamily. Homodimer. Pyridoxal 5'-phosphate serves as cofactor.

It is found in the cytoplasm. It carries out the reaction O-phospho-L-serine + 2-oxoglutarate = 3-phosphooxypyruvate + L-glutamate. The catalysed reaction is 4-(phosphooxy)-L-threonine + 2-oxoglutarate = (R)-3-hydroxy-2-oxo-4-phosphooxybutanoate + L-glutamate. Its pathway is amino-acid biosynthesis; L-serine biosynthesis; L-serine from 3-phospho-D-glycerate: step 2/3. It functions in the pathway cofactor biosynthesis; pyridoxine 5'-phosphate biosynthesis; pyridoxine 5'-phosphate from D-erythrose 4-phosphate: step 3/5. Catalyzes the reversible conversion of 3-phosphohydroxypyruvate to phosphoserine and of 3-hydroxy-2-oxo-4-phosphonooxybutanoate to phosphohydroxythreonine. This chain is Phosphoserine aminotransferase, found in Vesicomyosocius okutanii subsp. Calyptogena okutanii (strain HA).